The chain runs to 743 residues: Phosphoribosylformylglycinamidine synthase subunit PurL (743 aa).

Histidine 50 is an active-site residue. Residues tyrosine 53 and lysine 92 each coordinate ATP. Glutamate 94 is a Mg(2+) binding site. Residues 95 to 98 (SHNH) and arginine 117 each bind substrate. Histidine 96 functions as the Proton acceptor in the catalytic mechanism. Aspartate 118 serves as a coordination point for Mg(2+). Position 241 (glutamine 241) interacts with substrate. A Mg(2+)-binding site is contributed by aspartate 269. 313 to 315 (ESQ) provides a ligand contact to substrate. Residues aspartate 494 and glycine 531 each coordinate ATP. Residue asparagine 532 coordinates Mg(2+). Serine 534 serves as a coordination point for substrate.

It belongs to the FGAMS family. Monomer. Part of the FGAM synthase complex composed of 1 PurL, 1 PurQ and 2 PurS subunits.

It is found in the cytoplasm. It catalyses the reaction N(2)-formyl-N(1)-(5-phospho-beta-D-ribosyl)glycinamide + L-glutamine + ATP + H2O = 2-formamido-N(1)-(5-O-phospho-beta-D-ribosyl)acetamidine + L-glutamate + ADP + phosphate + H(+). It participates in purine metabolism; IMP biosynthesis via de novo pathway; 5-amino-1-(5-phospho-D-ribosyl)imidazole from N(2)-formyl-N(1)-(5-phospho-D-ribosyl)glycinamide: step 1/2. Its function is as follows. Part of the phosphoribosylformylglycinamidine synthase complex involved in the purines biosynthetic pathway. Catalyzes the ATP-dependent conversion of formylglycinamide ribonucleotide (FGAR) and glutamine to yield formylglycinamidine ribonucleotide (FGAM) and glutamate. The FGAM synthase complex is composed of three subunits. PurQ produces an ammonia molecule by converting glutamine to glutamate. PurL transfers the ammonia molecule to FGAR to form FGAM in an ATP-dependent manner. PurS interacts with PurQ and PurL and is thought to assist in the transfer of the ammonia molecule from PurQ to PurL. The protein is Phosphoribosylformylglycinamidine synthase subunit PurL of Sinorhizobium medicae (strain WSM419) (Ensifer medicae).